A 136-amino-acid polypeptide reads, in one-letter code: Histone H3.1 (136 aa).

The interval M1–R41 is disordered. K5 carries the N6,N6,N6-trimethyllysine; alternate modification. Residue K5 is modified to N6,N6-dimethyllysine; alternate. An N6-methyllysine; alternate mark is found at K5 and K10. K10 is modified (N6-acetyllysine; alternate). S11 is subject to Phosphoserine. An N6,N6-dimethyllysine; alternate modification is found at K15. An N6-acetyllysine; alternate mark is found at K15, K19, K24, K28, and K37. Residues K19, K24, K28, and K37 each carry the N6-methyllysine; alternate modification. Low complexity predominate over residues A22 to A33. N6,N6,N6-trimethyllysine; alternate is present on residues K28 and K37. 2 positions are modified to N6,N6-dimethyllysine; alternate: K28 and K37. Residues K57 and K65 each carry the N6-acetyllysine modification. K80 is subject to N6,N6,N6-trimethyllysine; alternate. K80 carries the post-translational modification N6,N6-dimethyllysine; alternate. N6-methyllysine; alternate is present on K80.

It belongs to the histone H3 family. As to quaternary structure, the nucleosome is a histone octamer containing two molecules each of H2A, H2B, H3 and H4 assembled in one H3-H4 heterotetramer and two H2A-H2B heterodimers. The octamer wraps approximately 147 bp of DNA. In terms of processing, phosphorylated to form H3S10ph. H3S10ph promotes subsequent H3K14ac formation and is required for transcriptional activation through TBP recruitment to the promoters. Mono-, di- and trimethylated by the COMPASS complex to form H3K4me1/2/3. H3K4me activates gene expression by regulating transcription elongation and plays a role in telomere length maintenance. H3K4me enrichment correlates with transcription levels, and occurs in a 5' to 3' gradient with H3K4me3 enrichment at the 5'-end of genes, shifting to H3K4me2 and then H3K4me1. Methylated by SET2 to form H3K36me. H3K36me represses gene expression. Methylated by DOT1 to form H3K79me. H3K79me is required for association of SIR proteins with telomeric regions and for telomeric silencing. The COMPASS-mediated formation of H3K4me2/3 and the DOT1-mediated formation of H3K79me require H2BK123ub1. Post-translationally, acetylation of histone H3 leads to transcriptional activation. H3K14ac formation by GCN5 is promoted by H3S10ph. H3K14ac can also be formed by ESA1. H3K56ac formation occurs predominantly in newly synthesized H3 molecules during G1, S and G2/M of the cell cycle and may be involved in DNA repair.

The protein resides in the nucleus. The protein localises to the chromosome. In terms of biological role, core component of nucleosome. Nucleosomes wrap and compact DNA into chromatin, limiting DNA accessibility to the cellular machineries which require DNA as a template. Histones thereby play a central role in transcription regulation, DNA repair, DNA replication and chromosomal stability. DNA accessibility is regulated via a complex set of post-translational modifications of histones, also called histone code, and nucleosome remodeling. The polypeptide is Histone H3.1 (HHT1) (Mycosarcoma maydis (Corn smut fungus)).